Consider the following 194-residue polypeptide: FMN-dependent NADH:quinone oxidoreductase (194 aa).

FMN is bound by residues S10, 16-18, 91-94, and 135-138; these read SQS, MYNF, and TRGG.

Belongs to the azoreductase type 1 family. In terms of assembly, homodimer. FMN serves as cofactor.

The catalysed reaction is 2 a quinone + NADH + H(+) = 2 a 1,4-benzosemiquinone + NAD(+). The enzyme catalyses N,N-dimethyl-1,4-phenylenediamine + anthranilate + 2 NAD(+) = 2-(4-dimethylaminophenyl)diazenylbenzoate + 2 NADH + 2 H(+). In terms of biological role, quinone reductase that provides resistance to thiol-specific stress caused by electrophilic quinones. Its function is as follows. Also exhibits azoreductase activity. Catalyzes the reductive cleavage of the azo bond in aromatic azo compounds to the corresponding amines. This Vibrio parahaemolyticus serotype O3:K6 (strain RIMD 2210633) protein is FMN-dependent NADH:quinone oxidoreductase.